The following is a 538-amino-acid chain: Carboxypeptidase 2 (538 aa).

An N-terminal signal peptide occupies residues 1-21; the sequence is MVAYRFLTLISLGLGSHCVSA. Asparagine 46 is a glycosylation site (N-linked (GlcNAc...) asparagine). The interval 53–76 is disordered; the sequence is PAFTSPGTVSRGFSDGTSGPTRDE. The region spanning 71 to 351 is the Peptidase M14 domain; the sequence is GPTRDETMEG…VMAKSVLQTA (281 aa). Zn(2+) contacts are provided by histidine 136, glutamate 139, and histidine 224. The active-site Proton donor/acceptor is the glutamate 322. N-linked (GlcNAc...) asparagine glycans are attached at residues asparagine 393 and asparagine 459.

The protein belongs to the peptidase M14 family. Zn(2+) is required as a cofactor.

It localises to the secreted. In terms of biological role, extracellular metalloprotease that contributes to pathogenicity. This chain is Carboxypeptidase 2 (MCPB), found in Trichophyton rubrum (Athlete's foot fungus).